The sequence spans 104 residues: Large ribosomal subunit protein bL21 (104 aa).

This sequence belongs to the bacterial ribosomal protein bL21 family. Part of the 50S ribosomal subunit. Contacts protein L20.

Functionally, this protein binds to 23S rRNA in the presence of protein L20. The protein is Large ribosomal subunit protein bL21 of Lactococcus lactis subsp. lactis (strain IL1403) (Streptococcus lactis).